A 365-amino-acid polypeptide reads, in one-letter code: Chorismate synthase (365 aa).

Positions 48 and 54 each coordinate NADP(+). FMN contacts are provided by residues 131-133, 243-244, G288, 303-307, and R329; these read RSS, NA, and KPTSS.

This sequence belongs to the chorismate synthase family. As to quaternary structure, homotetramer. FMNH2 serves as cofactor.

The catalysed reaction is 5-O-(1-carboxyvinyl)-3-phosphoshikimate = chorismate + phosphate. It participates in metabolic intermediate biosynthesis; chorismate biosynthesis; chorismate from D-erythrose 4-phosphate and phosphoenolpyruvate: step 7/7. Catalyzes the anti-1,4-elimination of the C-3 phosphate and the C-6 proR hydrogen from 5-enolpyruvylshikimate-3-phosphate (EPSP) to yield chorismate, which is the branch point compound that serves as the starting substrate for the three terminal pathways of aromatic amino acid biosynthesis. This reaction introduces a second double bond into the aromatic ring system. This chain is Chorismate synthase, found in Sinorhizobium fredii (strain NBRC 101917 / NGR234).